The following is a 389-amino-acid chain: Phosphopentomutase (389 aa).

6 residues coordinate Mn(2+): Asp-9, Asp-282, His-287, Asp-323, His-324, and His-335.

Belongs to the phosphopentomutase family. Requires Mn(2+) as cofactor.

The protein resides in the cytoplasm. The enzyme catalyses 2-deoxy-alpha-D-ribose 1-phosphate = 2-deoxy-D-ribose 5-phosphate. It catalyses the reaction alpha-D-ribose 1-phosphate = D-ribose 5-phosphate. It functions in the pathway carbohydrate degradation; 2-deoxy-D-ribose 1-phosphate degradation; D-glyceraldehyde 3-phosphate and acetaldehyde from 2-deoxy-alpha-D-ribose 1-phosphate: step 1/2. Functionally, isomerase that catalyzes the conversion of deoxy-ribose 1-phosphate (dRib-1-P) and ribose 1-phosphate (Rib-1-P) to deoxy-ribose 5-phosphate (dRib-5-P) and ribose 5-phosphate (Rib-5-P), respectively. This chain is Phosphopentomutase, found in Kosmotoga olearia (strain ATCC BAA-1733 / DSM 21960 / TBF 19.5.1).